The following is a 397-amino-acid chain: Ribosomal RNA large subunit methyltransferase I (397 aa).

The PUA domain occupies 2–82 (TTSIYLVKGR…EVINVDFFVK (81 aa)).

Belongs to the methyltransferase superfamily. RlmI family.

The protein localises to the cytoplasm. It catalyses the reaction cytidine(1962) in 23S rRNA + S-adenosyl-L-methionine = 5-methylcytidine(1962) in 23S rRNA + S-adenosyl-L-homocysteine + H(+). In terms of biological role, specifically methylates the cytosine at position 1962 (m5C1962) of 23S rRNA. This Photobacterium profundum (strain SS9) protein is Ribosomal RNA large subunit methyltransferase I.